Consider the following 335-residue polypeptide: Fructose-1,6-bisphosphatase class 1 (335 aa).

Residues E92, D114, L116, and D117 each coordinate Mg(2+). Substrate is bound by residues 117 to 120 (DGSS), N209, and K275. A Mg(2+)-binding site is contributed by E281.

The protein belongs to the FBPase class 1 family. Homotetramer. Requires Mg(2+) as cofactor.

The protein localises to the cytoplasm. The catalysed reaction is beta-D-fructose 1,6-bisphosphate + H2O = beta-D-fructose 6-phosphate + phosphate. It functions in the pathway carbohydrate biosynthesis; gluconeogenesis. The sequence is that of Fructose-1,6-bisphosphatase class 1 from Verminephrobacter eiseniae (strain EF01-2).